Consider the following 868-residue polypeptide: Probable beta-glucosidase F (868 aa).

Positions 1-20 (MAHRWLILALVAAAAPRALA) are cleaved as a signal peptide. Residues 21 to 40 (SPGPSLNERQSDDEPFSPPY) are disordered. Asn65, Asn73, and Asn257 each carry an N-linked (GlcNAc...) asparagine glycan. Residue Asp285 is part of the active site. Residues Asn328, Asn360, Asn395, Asn421, and Asn726 are each glycosylated (N-linked (GlcNAc...) asparagine). The disordered stretch occupies residues 731–752 (YPYPDGYSTDPQPPPRAGGAEG).

The protein belongs to the glycosyl hydrolase 3 family.

It is found in the secreted. The enzyme catalyses Hydrolysis of terminal, non-reducing beta-D-glucosyl residues with release of beta-D-glucose.. It participates in glycan metabolism; cellulose degradation. Functionally, beta-glucosidases are one of a number of cellulolytic enzymes involved in the degradation of cellulosic biomass. Catalyzes the last step releasing glucose from the inhibitory cellobiose. The polypeptide is Probable beta-glucosidase F (bglF) (Emericella nidulans (strain FGSC A4 / ATCC 38163 / CBS 112.46 / NRRL 194 / M139) (Aspergillus nidulans)).